Consider the following 192-residue polypeptide: uncharacterized protein (192 aa).

Residues 29 to 160 (QRQAAVLVPI…PLDIERKQQR (132 aa)) form the Nudix hydrolase domain. The Nudix box signature appears at 67 to 89 (GAADKTDRSIIETALREAQEEVA). Mg(2+) contacts are provided by Glu-83 and Glu-87.

The protein belongs to the Nudix hydrolase family. PCD1 subfamily. The cofactor is Mn(2+). Mg(2+) serves as cofactor.

Functionally, probably mediates the hydrolysis of some nucleoside diphosphate derivatives. This is an uncharacterized protein from Pectobacterium atrosepticum (strain SCRI 1043 / ATCC BAA-672) (Erwinia carotovora subsp. atroseptica).